The sequence spans 188 residues: Elongation factor P (188 aa).

The protein belongs to the elongation factor P family.

Its subcellular location is the cytoplasm. The protein operates within protein biosynthesis; polypeptide chain elongation. In terms of biological role, involved in peptide bond synthesis. Stimulates efficient translation and peptide-bond synthesis on native or reconstituted 70S ribosomes in vitro. Probably functions indirectly by altering the affinity of the ribosome for aminoacyl-tRNA, thus increasing their reactivity as acceptors for peptidyl transferase. This is Elongation factor P from Wolbachia sp. subsp. Brugia malayi (strain TRS).